Reading from the N-terminus, the 301-residue chain is Ribonuclease HIII (301 aa).

Residues 88-301 (WSVLGSDEVG…TQKARQLARQ (214 aa)) enclose the RNase H type-2 domain. A divalent metal cation is bound by residues Asp94, Glu95, and Asp197.

The protein belongs to the RNase HII family. RnhC subfamily. Requires Mn(2+) as cofactor. Mg(2+) serves as cofactor.

The protein localises to the cytoplasm. The enzyme catalyses Endonucleolytic cleavage to 5'-phosphomonoester.. Endonuclease that specifically degrades the RNA of RNA-DNA hybrids. In Limosilactobacillus fermentum (strain NBRC 3956 / LMG 18251) (Lactobacillus fermentum), this protein is Ribonuclease HIII.